A 307-amino-acid polypeptide reads, in one-letter code: Protoheme IX farnesyltransferase (307 aa).

9 consecutive transmembrane segments (helical) span residues 28–48 (VTQL…PGMV), 50–70 (WPVL…AFAI), 100–120 (ILLF…VFAN), 122–142 (LTMW…TLLL), 149–169 (NIVI…AAVA), 176–196 (AWIL…ALAL), 218–238 (FTLL…ILPF), 243–263 (SGYL…VHAW), and 282–302 (IVYL…KFGP).

The protein belongs to the UbiA prenyltransferase family. Protoheme IX farnesyltransferase subfamily.

It is found in the cell inner membrane. It catalyses the reaction heme b + (2E,6E)-farnesyl diphosphate + H2O = Fe(II)-heme o + diphosphate. The protein operates within porphyrin-containing compound metabolism; heme O biosynthesis; heme O from protoheme: step 1/1. Functionally, converts heme B (protoheme IX) to heme O by substitution of the vinyl group on carbon 2 of heme B porphyrin ring with a hydroxyethyl farnesyl side group. The protein is Protoheme IX farnesyltransferase of Ralstonia nicotianae (strain ATCC BAA-1114 / GMI1000) (Ralstonia solanacearum).